We begin with the raw amino-acid sequence, 973 residues long: DNA repair protein rhp26 (973 aa).

Positions 35–107 (ESREIEKKRL…DIKRRLNNED (73 aa)) form a coiled coil. The segment at 230–251 (RDQASASENNKDRGEFEGKDEW) is disordered. Positions 238 to 251 (NNKDRGEFEGKDEW) are enriched in basic and acidic residues. The Helicase ATP-binding domain maps to 289–490 (WELYCQEAGG…WNLFDFVFPG (202 aa)). 302-309 (DEMGLGKT) contributes to the ATP binding site. The interval 367–386 (SREKRQYESDASESEAEESK) is disordered. The DEAH box signature appears at 441–444 (DEGH). Residues 629–789 (VIRALLTLWK…RRFFKMTDLH (161 aa)) form the Helicase C-terminal domain. 3 disordered regions span residues 803–846 (ETGS…KGKK), 863–882 (KYKPPQESNVTKTNSDSTLG), and 930–973 (AVSS…KQRR). Over residues 834-846 (DRKKHKIHDKGKK) the composition is skewed to basic residues. Polar residues-rich tracts occupy residues 868 to 882 (QESNVTKTNSDSTLG) and 947 to 965 (STNVPGTSKPSGPITSSTL).

The protein resides in the cytoplasm. It localises to the nucleus. In terms of biological role, involved in transcription-coupled repair (TCR). The protein is DNA repair protein rhp26 (rhp26) of Schizosaccharomyces pombe (strain 972 / ATCC 24843) (Fission yeast).